Reading from the N-terminus, the 370-residue chain is tRNA 2-selenouridine synthase (370 aa).

In terms of domain architecture, Rhodanese spans 12–136 (FLEDVPMMDT…MRNFLLDTTR (125 aa)). The active-site S-selanylcysteine intermediate is the C95.

The protein belongs to the SelU family. As to quaternary structure, monomer.

The catalysed reaction is 5-methylaminomethyl-2-thiouridine(34) in tRNA + selenophosphate + (2E)-geranyl diphosphate + H2O + H(+) = 5-methylaminomethyl-2-selenouridine(34) in tRNA + (2E)-thiogeraniol + phosphate + diphosphate. It carries out the reaction 5-methylaminomethyl-2-thiouridine(34) in tRNA + (2E)-geranyl diphosphate = 5-methylaminomethyl-S-(2E)-geranyl-thiouridine(34) in tRNA + diphosphate. The enzyme catalyses 5-methylaminomethyl-S-(2E)-geranyl-thiouridine(34) in tRNA + selenophosphate + H(+) = 5-methylaminomethyl-2-(Se-phospho)selenouridine(34) in tRNA + (2E)-thiogeraniol. It catalyses the reaction 5-methylaminomethyl-2-(Se-phospho)selenouridine(34) in tRNA + H2O = 5-methylaminomethyl-2-selenouridine(34) in tRNA + phosphate. Involved in the post-transcriptional modification of the uridine at the wobble position (U34) of tRNA(Lys), tRNA(Glu) and tRNA(Gln). Catalyzes the conversion of 2-thiouridine (S2U-RNA) to 2-selenouridine (Se2U-RNA). Acts in a two-step process involving geranylation of 2-thiouridine (S2U) to S-geranyl-2-thiouridine (geS2U) and subsequent selenation of the latter derivative to 2-selenouridine (Se2U) in the tRNA chain. This chain is tRNA 2-selenouridine synthase, found in Azotobacter vinelandii (strain DJ / ATCC BAA-1303).